A 613-amino-acid chain; its full sequence is Leucine-rich repeat and immunoglobulin-like domain-containing nogo receptor-interacting protein 1 (613 aa).

The signal sequence occupies residues 1–34 (MLAGEASMRSPILACWQPILLLMLGSILSGSATG). 2 cysteine pairs are disulfide-bonded: Cys35–Cys41 and Cys39–Cys50. In terms of domain architecture, LRRNT spans 35–64 (CPPRCECSAQERAVLCHRKRFMVVPEGIPT). Over 35 to 554 (CPPRCECSAQ…FDIKTLIIAT (520 aa)) the chain is Extracellular. LRR repeat units follow at residues 65–86 (ETRQLDLGKNRIKTLNQDEFAN), 89–110 (HLEELELNENIISAIEPGAFNN), 113–134 (NLRTLGLRSNRLKLIPLGVFTG), 137–158 (NLTKLDISENKIVILLDYMFQD), 161–182 (NLKSLEVGDNDLVYISHRAFSG), 185–206 (SLEQLTLEKCNLTSIPTEALSH), 209–230 (GLIVLRLRHLNINAIRDYSFKR), 257–278 (NLTSLSITHCNLTSIPYVSVRH), 281–302 (YLRFLNLSYNPIVTIEGSMLHD), 305–326 (RLQEIQLVGGQLTTVEPFAFRG), and 329–350 (YLRILNVSGNLLTTLEESAFHS). Residue Asn137 is glycosylated (N-linked (GlcNAc...) asparagine). Asn195 carries N-linked (GlcNAc...) asparagine glycosylation. 3 N-linked (GlcNAc...) asparagine glycosylation sites follow: Asn257, Asn267, and Asn286. A glycan (N-linked (GlcNAc...) asparagine) is linked at Asn334. An LRRCT domain is found at 362-416 (NPLACDCRLLWVFRRRWRLNFNKQQPTCSTPEFVQGKEFKDFPDVLLPNYFTCRR). 3 disulfides stabilise this stretch: Cys366–Cys389, Cys368–Cys414, and Cys439–Cys490. The Ig-like C2-type domain occupies 404 to 508 (PDVLLPNYFT…DTMLAHLHVR (105 aa)). 5 N-linked (GlcNAc...) asparagine glycosylation sites follow: Asn485, Asn498, Asn519, Asn530, and Asn535. Residues 555-575 (TMGFISFLGVVLFCLVLLFLW) form a helical membrane-spanning segment. Residues 576-613 (SRGKGNTKHNIEIEYVPRKSDAGISSADAPRKFNMKMI) are Cytoplasmic-facing.

Homotetramer. Forms ternary complex with RTN4R/NGFR and RTN4R/TNFRSF19. In terms of processing, N-glycosylated. Contains predominantly high-mannose glycans.

Its subcellular location is the cell membrane. In terms of biological role, functional component of the Nogo receptor signaling complex (RTN4R/NGFR) in RhoA activation responsible for some inhibition of axonal regeneration by myelin-associated factors. Is also an important negative regulator of oligodentrocyte differentiation and axonal myelination. The polypeptide is Leucine-rich repeat and immunoglobulin-like domain-containing nogo receptor-interacting protein 1 (LINGO1) (Gallus gallus (Chicken)).